A 58-amino-acid polypeptide reads, in one-letter code: UPF0391 membrane protein Sden_3712 (58 aa).

Helical transmembrane passes span 6-26 (LTFL…IAGA) and 27-47 (AAGI…ISLV).

This sequence belongs to the UPF0391 family.

It is found in the cell membrane. The sequence is that of UPF0391 membrane protein Sden_3712 from Shewanella denitrificans (strain OS217 / ATCC BAA-1090 / DSM 15013).